A 2192-amino-acid chain; its full sequence is Non-reducing polyketide synthase 1 (2192 aa).

Residues 5-243 (LLLGDQTADQ…VSIPIYAPYH (239 aa)) form an N-terminal acylcarrier protein transacylase domain (SAT) region. The Ketosynthase family 3 (KS3) domain occupies 374 to 806 (NDKIAIVGMS…GGNTSLLLED (433 aa)). Residues cysteine 546, histidine 681, and histidine 724 each act as for beta-ketoacyl synthase activity in the active site. Positions 905–1218 (FCFTGQGSQY…ANSMCALFLA (314 aa)) are malonyl-CoA:ACP transacylase (MAT) domain. Serine 993 acts as the For acyl/malonyl transferase activity in catalysis. Residues 1293 to 1610 (SCQKIIDEEF…RKVLNTFLPP (318 aa)) are product template (PT) domain. The N-terminal hotdog fold stretch occupies residues 1295–1430 (QKIIDEEFSA…CTVKFEDINT (136 aa)). Residues 1295–1605 (QKIIDEEFSA…FQKIPRKVLN (311 aa)) form the PKS/mFAS DH domain. The active-site Proton acceptor; for dehydratase activity is histidine 1327. Positions 1458-1605 (AHVIGRGLAY…FQKIPRKVLN (148 aa)) are C-terminal hotdog fold. Catalysis depends on aspartate 1518, which acts as the Proton donor; for dehydratase activity. A disordered region spans residues 1639 to 1668 (TQAQPAKAVPKQVTVAAPTPKAAPKKADLK). One can recognise a Carrier 1 domain in the interval 1670–1747 (PAGPTIITRV…EMKKFFSQYD (78 aa)). Serine 1707 bears the O-(pantetheine 4'-phosphoryl)serine mark. The interval 1748–1788 (GEVGTPEQDDSDSDSETSGDASTPMSEVGTPMTIPSSAVSE) is disordered. Residues 1754 to 1764 (EQDDSDSDSET) show a composition bias toward acidic residues. In terms of domain architecture, Carrier 2 spans 1798–1875 (APASGEVSIA…DVENALDMRP (78 aa)). Serine 1835 carries the post-translational modification O-(pantetheine 4'-phosphoryl)serine. Positions 1913-2164 (SKYPAATSVL…SMMKPPHVSI (252 aa)) are thioesterase (TE) domain.

Functionally, non-reducing polyketide synthase; part of the gene cluster that mediates the biosynthesis of elsinochromes, pigments consisting of at least four interconvertible tautomers (A, B, C and D) that have a core phenolic quinone to which various side chains are attached and which play an important role in fungal pathogenesis. The non-reducing polyketide synthase PKS1 was proposed to iteratively catalyze decarboxylation between acetyl-CoA and malonyl-CoA subunits for polyketide chain elongation. The released polyketide undergoes cyclization to form an aromatic ring, and proceeds via serial modification steps to produce the heptaketide back- bone of elsinochrome. As elsinochrome has a symmetrical structure, two identical heptaketides are fused to form a core 1,2-dihydrobenzo-perylene ring structure, which can then be successively modified to produce the various derivatives of elsinochrome. Some of these reactions may be cooperatively carried out, at least in part, by the products of RDT1, OXR1 and PKS1. PRF1, embedded within the elsinochrome cluster possibly functions to stabilize some of the biosynthetic enzymes required for elsinochrome production. As prefoldin is a hexamer containing 2 a and 4 b subunits, additional prefoldin subunits, whose coding genes may not immediately link to the elsinochrome biosynthetic gene cluster, are required to fulfill the chaperone function. In addition, no methyltransferase-coding gene exists within the biosynthetic gene cluster, even though elsinochrome has four methyl groups at positions C3, C7, C8 and C12. Apparently, the identified gene cluster does not contain the entire entourage of genes responsible for elsinochrome biosynthesis. Once elsinochrome is synthesized, it must be exported outside the fungal cells, which is probably accomplished by the ECT1 transporter, to avoid toxicity. This Elsinoe fawcettii (Citrus scab fungus) protein is Non-reducing polyketide synthase 1.